We begin with the raw amino-acid sequence, 936 residues long: MAVFPWHSRNRNYKAELASCRLETVPLECGDYHPLKPITVTESKTKKVSRKGSTSSTSSSSSSSVVDPLSSVLDGTDPLSMFAATSDPAATVTVTESSRKKRDKDDNSFVGPDFEPWANKRGEILARYTTTEKLSINLFMGSEKGRAGAAASAMSEKVRTRLEELDDFEEGSQKELLNLTQQDYVNRIEELNQSLKDAWASDQKVKALKIVIQCSKLLSDTSVIQFYPSKFVLITDILDTFGKLVYERIYSMCVDSRGALPDHFSPENVNDTAKETCLNWFFKIASIRELIPRFYVEASILKCNKFLSKTGISECLPRLTCMIRGIGDPLVSVYARAYLCRVGMEVAPHLKESLTRNFFDFLLTFKQIHGDTVQNQLVAQGVELLSYLPLYSPAMGWIFQCVSYHAPEALLTEMMERCKKLGNNALLLNSVMSAFRAEFIATRSMDFIGMIKECDESGFPKHLLFRSLGVNLALADPPENDRLQILNEAWKVITKLKSPQDYINCAEVWVEYTCRHFTKREVNTVLADVIKHMTPDRAFEDSYPQLQSIIKKVIAHFHDFSVLFSVEKFLPFLDMFQKESVRVEVCKCIMEAFINALTLEDEKRMLAHLINGFIKMVSFGRDFEQQLSFYVESRSMFCNLEPVLVQLIHSVNRLAMETRKVMKGNHSRKTAAFVRACVAYCFITIPSLVGIFTRLNLYLHSGQVALANQCLSQADAFFKAAISLVPEVPKSISIDGKLRPSEPFLLEFLCNFFSTLLIVPDHPEHGVLFLVRELLNVIQDYTWEDSSDDKIRIYTSVLHLLSAMSQDTYLYHIDKVDSNDSLYGGDSRFLAENSKLCEAAMVQILEHLKTLAKDEALKRQSLLGLSFFNSILAHGDLRNNKLNQLSVNLWHLAQRHGCADTRTMVKTLDYIKKRSKQPDMNHLSELALRLPLQTRT.

Disordered regions lie at residues 43 to 69 and 87 to 113; these read SKTKKVSRKGSTSSTSSSSSSSVVDPL and DPAATVTVTESSRKKRDKDDNSFVGPD. The span at 51–69 shows a compositional bias: low complexity; sequence KGSTSSTSSSSSSSVVDPL. Serine 265 carries the phosphoserine modification. A helical transmembrane segment spans residues 672–692; the sequence is AFVRACVAYCFITIPSLVGIF.

This sequence belongs to the VPS35L family. Component of the heterotrimeric retriever complex formed by VPS26C, VPS29 and VPS35L. Interacts with VPS29. Interacts with COMMD1, CCDC93 and CCDC22; associates with the CCC (COMMD/CCDC22/CCDC93) complex which contains at least COMMD1 (and possibly other COMM domain-containing proteins), CCDC22 and CCDC93. Interacts with WASHC1, WASHC2A and WASHC2C. Interacts with SNX17 and SNX31.

Its subcellular location is the membrane. It is found in the endosome. In terms of biological role, acts as a component of the retriever complex. The retriever complex is a heterotrimeric complex related to retromer cargo-selective complex (CSC) and essential for retromer-independent retrieval and recycling of numerous cargos such as integrin alpha-5/beta-1 (ITGA5:ITGB1). The recruitment of the retriever complex to the endosomal membrane involves CCC and WASH complexes. In the endosomes, drives the retrieval and recycling of NxxY-motif-containing cargo proteins by coupling to SNX17, a cargo essential for the homeostatic maintenance of numerous cell surface proteins associated with processes that include cell migration, cell adhesion, nutrient supply and cell signaling. Involved in copper-dependent ATP7A trafficking between the trans-Golgi network and vesicles in the cell periphery; the function is proposed to depend on its association with the CCC complex and cooperation with the WASH complex on early endosomes. Seems not to be required for CCC complex stability. The sequence is that of VPS35 endosomal protein-sorting factor-like from Rattus norvegicus (Rat).